Here is a 478-residue protein sequence, read N- to C-terminus: RNA-binding protein 42 (478 aa).

Over residues 1-20 the composition is skewed to low complexity; it reads MASAMAGAGPAPGLPVAGGP. The disordered stretch occupies residues 1 to 33; it reads MASAMAGAGPAPGLPVAGGPVVPGPGVGIPGKS. The residue at position 2 (A2) is an N-acetylalanine. At S133 the chain carries Phosphoserine. Asymmetric dimethylarginine occurs at positions 151, 156, 166, and 179. Disordered stretches follow at residues 171–207 and 317–354; these read LSSA…MLPP and SLRP…PEKL. A compositionally biased stretch (pro residues) spans 193–205; that stretch reads PPLPGPPGPPMML. The interval 234–478 is necessary for interaction with HNRNPK; the sequence is ELGLGLGLGL…QKEKKKLGLR (245 aa). The span at 343 to 354 shows a compositional bias: basic and acidic residues; it reads GEDKKKGKPEKL. Positions 379-457 constitute an RRM domain; it reads FRIFCGDLGN…RPIKLRKSMW (79 aa).

It belongs to the RRM RBM42 family. In terms of assembly, interacts with HNRNPK. As to expression, expressed in cell lines (at protein level). Expressed in heart, brain, spleen, lung, liver, skeletal muscle, kidney and testis.

Its subcellular location is the nucleus. It is found in the cytoplasm. Functionally, binds (via the RRM domain) to the 3'-untranslated region (UTR) of CDKN1A mRNA. This chain is RNA-binding protein 42 (Rbm42), found in Mus musculus (Mouse).